The following is an 80-amino-acid chain: Small ribosomal subunit protein uS17 (80 aa).

This sequence belongs to the universal ribosomal protein uS17 family. As to quaternary structure, part of the 30S ribosomal subunit.

Its function is as follows. One of the primary rRNA binding proteins, it binds specifically to the 5'-end of 16S ribosomal RNA. The sequence is that of Small ribosomal subunit protein uS17 from Chelativorans sp. (strain BNC1).